The following is a 54-amino-acid chain: U-reduvitoxin-Pr7a (54 aa).

A signal peptide spans 1–23 (MDFLRILLFVLACIMALFTSAIA). Disulfide bonds link Cys26–Cys41, Cys33–Cys46, and Cys40–Cys53.

This sequence belongs to the venom Ptu1-like knottin family. As to expression, expressed by the venom gland.

Its subcellular location is the secreted. Binds reversibly and blocks P/Q-type voltage-gated calcium channels (Cav). The sequence is that of U-reduvitoxin-Pr7a from Platymeris rhadamanthus (Red spot assassin bug).